The following is a 137-amino-acid chain: Large ribosomal subunit protein uL16 (137 aa).

The protein belongs to the universal ribosomal protein uL16 family. As to quaternary structure, part of the 50S ribosomal subunit.

In terms of biological role, binds 23S rRNA and is also seen to make contacts with the A and possibly P site tRNAs. This is Large ribosomal subunit protein uL16 from Psychrobacter cryohalolentis (strain ATCC BAA-1226 / DSM 17306 / VKM B-2378 / K5).